The chain runs to 308 residues: Growth/differentiation factor 15 (308 aa).

The first 29 residues, 1 to 29, serve as a signal peptide directing secretion; it reads MPGQELRTVNGSQMLLVLLVLSWLPHGGA. A propeptide spanning residues 30–194 is cleaved from the precursor; sequence LSLAEASRAS…RPQAARGRRR (165 aa). A glycan (N-linked (GlcNAc...) asparagine) is linked at Asn70. Residues 152–177 form a disordered region; sequence APALHLRLSPPPSQSDQLLAESSSAR. Polar residues predominate over residues 165-177; sequence QSDQLLAESSSAR. 4 cysteine pairs are disulfide-bonded: Cys203/Cys210, Cys211/Cys274, Cys240/Cys305, and Cys244/Cys307.

Belongs to the TGF-beta family. Homodimer; disulfide-linked. Interacts with GFRAL and RET; ligand of GFRAL, which mediates GDF15 internalization and cellular signaling through interaction with RET via the formation of a 2:2:2 ternary complex composed of GDF15, GFRAL and RET. Detected in plasma (at protein level). Highly expressed in placenta, with lower levels in prostate and colon and some expression in kidney.

It localises to the secreted. Its function is as follows. Hormone produced in response to various stresses to confer information about those stresses to the brain, and trigger an aversive response, characterized by nausea, vomiting, and/or loss of appetite. The aversive response is both required to reduce continuing exposure to those stresses at the time of exposure and to promote avoidance behavior in the future. Acts by binding to its receptor, GFRAL, activating GFRAL-expressing neurons localized in the area postrema and nucleus tractus solitarius of the brainstem. It then triggers the activation of neurons localized within the parabrachial nucleus and central amygdala, which constitutes part of the 'emergency circuit' that shapes responses to stressful conditions. The GDF15-GFRAL signal induces expression of genes involved in metabolism, such as lipid metabolism in adipose tissues. Required for avoidance behavior in response to food allergens: induced downstream of mast cell activation to promote aversion and minimize harmful effects of exposure to noxious substances. In addition to suppress appetite, also promotes weight loss by enhancing energy expenditure in muscle: acts by increasing calcium futile cycling in muscle. Contributes to the effect of metformin, an anti-diabetic drug, on appetite reduction and weight loss: produced in the kidney in response to metformin treatment, thereby activating the GDF15-GFRAL response, leading to reduced appetite and weight. The contribution of GDF15 to weight loss following metformin treatment is however limited and subject to discussion. Produced in response to anticancer drugs, such as camptothecin or cisplatin, promoting nausea, vomiting and contributing to malnutrition. Overproduced in many cancers, promoting anorexia in cancer (cachexia). Responsible for the risk of nausea and vomiting during pregnancy: high levels of GDF15 during pregnancy, mostly originating from the fetus, are associated with increased nausea and vomiting. Maternal sensitivity to nausea is probably determined by pre-pregnancy exposure to GDF15, women with naturally high level of GDF15 being less susceptible to nausea than women with low levels of GDF15 before pregnancy. Promotes metabolic adaptation in response to systemic inflammation caused by bacterial and viral infections in order to promote tissue tolerance and prevent tissue damage. Required for tissue tolerance in response to myocardial infarction by acting as an inhibitor of leukocyte integring activation, thereby protecting against cardiac rupture. Inhibits growth hormone signaling on hepatocytes. In Homo sapiens (Human), this protein is Growth/differentiation factor 15.